The primary structure comprises 345 residues: MESGRLIFSTAGSGAGQMLFLDCGAGGGGGGVGGGAMFHRGARPVLGMEEGGRGVKRPFFTTPDELLEEEYYDEQLPEKKRRLTPEQVHLLERSFEEENKLEPERKTELARKLGLQPRQVAVWFQNRRARWKTKQLERDFDRLKASFDALRADHDALLQDNHRLHSQVMSLTEKLQEKETTTEGSAGAAVDVPGLPAAADVKVAVPDAEEPALEEAAAAFEEQQEQQVKAEDRLSTGSGGSAVVDTDAQLVVGCGRQHLAAVDSSVESYFPGGDEYHDCVMGPMDHAAGGIQSEEDDGAGSDEGCSYYADDAGVLFADHGHHHHHQHADDDEEDGQQISCWWMWN.

The segment at residues 76–135 (LPEKKRRLTPEQVHLLERSFEEENKLEPERKTELARKLGLQPRQVAVWFQNRRARWKTKQ) is a DNA-binding region (homeobox). The tract at residues 134-178 (KQLERDFDRLKASFDALRADHDALLQDNHRLHSQVMSLTEKLQEK) is leucine-zipper. A disordered region spans residues 220-241 (FEEQQEQQVKAEDRLSTGSGGS).

This sequence belongs to the HD-ZIP homeobox family. Class I subfamily. As to expression, expressed in seedlings, stems, leaf sheaths and blades and panicles.

The protein localises to the nucleus. Probable transcription factor. The polypeptide is Homeobox-leucine zipper protein HOX16 (HOX16) (Oryza sativa subsp. indica (Rice)).